We begin with the raw amino-acid sequence, 302 residues long: MNPLELKKAVGSGLLSFPVTHFDNDLKFDEAKYRRHVEWLSGYDAAALFAAGGTGEFFSLNPAEVPQVVQAAKAVAGNTPIISGTGYGTSIAVEIAKSAEKAGADGLLLLPPYLMFAEQEGLIAHVKAVCQSVGIGVIVYNRDNAILNADSIARLTDECPNLIGFKDGVGDVDKVIEITTKLQDRLVYVGGMPTHEVYAQAYFAAGVTTYSSAVFNFVPALAQRFYGALRTGDQATVDEILKGFFFPFVALRNRKKGYAVSIIKAGLRVLGQDPGPVRPPLTDLTPEELAALAQIIETAKAA.

This sequence belongs to the DapA family.

It catalyses the reaction 5-dehydro-4-deoxy-D-glucarate + H(+) = 2,5-dioxopentanoate + CO2 + H2O. It participates in carbohydrate acid metabolism; D-glucarate degradation; 2,5-dioxopentanoate from D-glucarate: step 2/2. The sequence is that of Probable 5-dehydro-4-deoxyglucarate dehydratase from Rhizobium rhizogenes (strain K84 / ATCC BAA-868) (Agrobacterium radiobacter).